Reading from the N-terminus, the 168-residue chain is MPLLDSFKVDHTVMKAPAVRVAKIMRTPKGDDITVFDLRFCVPNKEILSPKGIHTLEHLFAGFMREHLNGDSVEIIDISPMGCRTGFYMSLIGTPNEQQVADAWLASMRDVLTVQDQSTIPELNIYQCGTYTEHSLADAHETARHVIEKGIAINKNEDLLLDEKLLNL.

The Fe cation site is built by His-54, His-58, and Cys-128.

The protein belongs to the LuxS family. As to quaternary structure, homodimer. Fe cation is required as a cofactor.

The catalysed reaction is S-(5-deoxy-D-ribos-5-yl)-L-homocysteine = (S)-4,5-dihydroxypentane-2,3-dione + L-homocysteine. In terms of biological role, involved in the synthesis of autoinducer 2 (AI-2) which is secreted by bacteria and is used to communicate both the cell density and the metabolic potential of the environment. The regulation of gene expression in response to changes in cell density is called quorum sensing. Catalyzes the transformation of S-ribosylhomocysteine (RHC) to homocysteine (HC) and 4,5-dihydroxy-2,3-pentadione (DPD). The protein is S-ribosylhomocysteine lyase of Mannheimia succiniciproducens (strain KCTC 0769BP / MBEL55E).